The sequence spans 187 residues: MTTTEKVQPRLKERYRNEIRDSLQQQFGYANVMQIPTVTKVVVNMGIGEAARDAKLINGAVNDLALITGQRPEIRRARKSIAQFKLREGMPIGARVTLRGDRMWEFLDRLTSIALPRIRDFRGLSPKQFDGVGNYTFGLAEQSVFHEIDVDKIDRVRGMDINVVTSATTDDEGRALLRALGFPFKEN.

The protein belongs to the universal ribosomal protein uL5 family. As to quaternary structure, part of the 50S ribosomal subunit; part of the 5S rRNA/L5/L18/L25 subcomplex. Contacts the 5S rRNA and the P site tRNA. Forms a bridge to the 30S subunit in the 70S ribosome.

In terms of biological role, this is one of the proteins that bind and probably mediate the attachment of the 5S RNA into the large ribosomal subunit, where it forms part of the central protuberance. In the 70S ribosome it contacts protein S13 of the 30S subunit (bridge B1b), connecting the 2 subunits; this bridge is implicated in subunit movement. Contacts the P site tRNA; the 5S rRNA and some of its associated proteins might help stabilize positioning of ribosome-bound tRNAs. This chain is Large ribosomal subunit protein uL5, found in Mycobacterium avium (strain 104).